The chain runs to 492 residues: Cysteine--tRNA ligase (492 aa).

Residue C27 participates in Zn(2+) binding. A 'HIGH' region motif is present at residues 29–39 (VTVYDLCHLGH). Zn(2+)-binding residues include C211, H236, and E240. The 'KMSKS' region signature appears at 268-272 (KMSKS). K271 is an ATP binding site.

This sequence belongs to the class-I aminoacyl-tRNA synthetase family. As to quaternary structure, monomer. Zn(2+) is required as a cofactor.

It is found in the cytoplasm. The catalysed reaction is tRNA(Cys) + L-cysteine + ATP = L-cysteinyl-tRNA(Cys) + AMP + diphosphate. The chain is Cysteine--tRNA ligase from Prochlorococcus marinus (strain MIT 9515).